The following is a 383-amino-acid chain: Putative F-box protein At4g09190 (383 aa).

In terms of domain architecture, F-box spans 16–67 (RSQREHIPLDLIVEIVSSLPAKSIVRFRSVSKLWSSIITTPDFTSSVVTRSL).

This is Putative F-box protein At4g09190 from Arabidopsis thaliana (Mouse-ear cress).